The chain runs to 625 residues: tRNA uridine 5-carboxymethylaminomethyl modification enzyme MnmG (625 aa).

FAD is bound by residues 13–18 (GGGHAG), Val125, and Ser182. 276-290 (GPRYCPSIEDKITRF) contacts NAD(+). Residue Gln373 participates in FAD binding.

This sequence belongs to the MnmG family. As to quaternary structure, homodimer. Heterotetramer of two MnmE and two MnmG subunits. FAD serves as cofactor.

Its subcellular location is the cytoplasm. Functionally, NAD-binding protein involved in the addition of a carboxymethylaminomethyl (cmnm) group at the wobble position (U34) of certain tRNAs, forming tRNA-cmnm(5)s(2)U34. The protein is tRNA uridine 5-carboxymethylaminomethyl modification enzyme MnmG of Lactococcus lactis subsp. cremoris (strain MG1363).